We begin with the raw amino-acid sequence, 61 residues long: Protein SspF (61 aa).

The protein belongs to the alpha/beta-type SASP family.

Functionally, may play some important role in either sporulation or the dormant spore. This Bacillus subtilis (strain 168) protein is Protein SspF (sspF).